A 209-amino-acid polypeptide reads, in one-letter code: MGYFPYLAVFVCLLASGDAQWKGLRGSTKASWVRVVSPTLNVTQEAYIWDADSGISFISRSKLLTGTSINRNRAYTDYNQPKIAIKFRKDVGRTCILLDVASALIGTFNETSTNLQALTVLDTTEEKSYQSVGTVLSATSQSAFDLQHPFIQKKCSDRNYNYLATTELTAGAAPPPASDKFTVFTTWGKVHLYILQSTGLVITTTTEAP.

The N-terminal stretch at 1-19 is a signal peptide; it reads MGYFPYLAVFVCLLASGDA. N-linked (GlcNAc...) asparagine glycosylation is found at N41 and N109.

As to expression, component of the acid-soluble organic matrix of prismatic shell layers (at protein level).

It is found in the secreted. This is an uncharacterized protein from Haliotis asinina (Donkey's ear abalone).